Here is a 225-residue protein sequence, read N- to C-terminus: tRNA (guanine-N(1)-)-methyltransferase (225 aa).

S-adenosyl-L-methionine is bound by residues Gly-112 and 132-137; that span reads IGDYVL.

The protein belongs to the RNA methyltransferase TrmD family. In terms of assembly, homodimer.

The protein localises to the cytoplasm. The catalysed reaction is guanosine(37) in tRNA + S-adenosyl-L-methionine = N(1)-methylguanosine(37) in tRNA + S-adenosyl-L-homocysteine + H(+). In terms of biological role, specifically methylates guanosine-37 in various tRNAs. This chain is tRNA (guanine-N(1)-)-methyltransferase, found in Bacteroides thetaiotaomicron (strain ATCC 29148 / DSM 2079 / JCM 5827 / CCUG 10774 / NCTC 10582 / VPI-5482 / E50).